We begin with the raw amino-acid sequence, 268 residues long: Probable membrane transporter protein HI_0806 (268 aa).

A run of 8 helical transmembrane segments spans residues 6–26 (IFIL…FGIG), 46–66 (VISA…LLFF), 79–99 (ILWS…SFYF), 101–121 (TAII…KTFL), 147–167 (GGGL…APLV), 178–198 (IAVY…YGYL), 212–232 (LGLN…MSFF), and 248–268 (LLAI…FVFH).

Belongs to the 4-toluene sulfonate uptake permease (TSUP) (TC 2.A.102) family.

The protein localises to the cell membrane. The polypeptide is Probable membrane transporter protein HI_0806 (Haemophilus influenzae (strain ATCC 51907 / DSM 11121 / KW20 / Rd)).